Consider the following 170-residue polypeptide: Large ribosomal subunit protein uL11 (170 aa).

This sequence belongs to the universal ribosomal protein uL11 family. As to quaternary structure, part of the ribosomal stalk of the 50S ribosomal subunit. Interacts with L10 and the large rRNA to form the base of the stalk. L10 forms an elongated spine to which L12 dimers bind in a sequential fashion forming a multimeric L10(L12)X complex.

Forms part of the ribosomal stalk which helps the ribosome interact with GTP-bound translation factors. This chain is Large ribosomal subunit protein uL11, found in Saccharolobus islandicus (strain Y.N.15.51 / Yellowstone #2) (Sulfolobus islandicus).